The sequence spans 69 residues: Putative membrane protein insertion efficiency factor (69 aa).

It belongs to the UPF0161 family.

The protein resides in the cell membrane. Functionally, could be involved in insertion of integral membrane proteins into the membrane. The sequence is that of Putative membrane protein insertion efficiency factor from Clostridium botulinum (strain Okra / Type B1).